The chain runs to 979 residues: MRGYHGDRGSHPRPARFADQQHMDVGPAARAPYLLGSREAFSTEPRFCAPRAGLGHISPEGPLSLSEGPSVGPEGGPAGAGVGGGSSTFPRMYPGQGPFDTCEDCVGHPQGKGAPRLPPTLLDQFEKQLPVQQDGFHTLPYQRGPAGAGPGPAPGTGTAPEPRSESPSRIRHLVHSVQKLFAKSHSLEAPGKRDYNGPKAEGRGGSGGDSYPGPGSGGPHTSHHHHHHHHHHHHQSRHGKRSKSKDRKGDGRHQAKSTGWWSSDDNLDSDSGFLAGGRPPGEPGGPFCLEGPDGSYRDLSFKGRSGGSEGRCLACTGMSMSLDGQSVKRSAWHTMMVSQGRDGYPGAGPGKGLLGPETKAKARTYHYLQVPQDDWGGYPTGGKDGEIPCRRMRSGSYIKAMGDEESGDSDGSPKTSPKAVARRFTTRRSSSVDQARINCCVPPRIHPRSSIPGYSRSLTTGQLSDELNQQLEAVCGSVFGELESQAVDALDLPGCFRMRSHSYLRAIQAGCSQDDDCLPLLATPAAVSGRPGSSFNFRKAPPPIPPGSQAPPRISITAQSSTDSAHESFTAAEGPARRCSSADGLDGPAMGARTLELAPVPPRASPKPPTLIIKTIPGREELRSLARQRKWRPSIGVQVETISDSDTENRSRREFHSIGVQVEEDKRRARFKRSNSVTAGVQADLELEGLAGLATVATEDKALQFGRSFQRHASEPQPGPRAPTYSVFRTVHTQGQWAYREGYPLPYEPPATDGSPGPAPAPTPGPGAGRRDSWIERGSRSLPDSGRASPCPRDGEWFIKMLRAEVEKLEHWCQQMEREAEDYELPEEILEKIRSAVGSTQLLLSQKVQQFFRLCQQSMDPTAFPVPTFQDLAGFWDLLQLSIEDVTLKFLELQQLKANSWKLLEPKEEKKVPPPIPKKPLRGRGVPVKERSLDSVDRQRQEARKRLLAAKRAASFRHSSATESADSIEIYIPEAQTRL.

Positions 1-10 are enriched in basic and acidic residues; that stretch reads MRGYHGDRGS. Disordered regions lie at residues 1 to 20, 52 to 95, 136 to 169, 182 to 291, 400 to 429, and 537 to 581; these read MRGY…FADQ, AGLG…MYPG, FHTL…SPSR, AKSH…CLEG, AMGD…TRRS, and FRKA…RCSS. Ser58 carries the post-translational modification Phosphoserine. Positions 73-86 are enriched in gly residues; that stretch reads PEGGPAGAGVGGGS. The segment covering 190–202 has biased composition (basic and acidic residues); it reads PGKRDYNGPKAEG. A compositionally biased stretch (gly residues) spans 203–218; that stretch reads RGGSGGDSYPGPGSGG. Over residues 221 to 246 the composition is skewed to basic residues; sequence TSHHHHHHHHHHHHQSRHGKRSKSKD. Ser406, Ser409, Ser412, and Ser416 each carry phosphoserine. Residues 540 to 549 show a composition bias toward pro residues; sequence APPPIPPGSQ. Ser643 and Ser645 each carry phosphoserine. Disordered regions lie at residues 741–790 and 908–940; these read EGYP…RASP and EEKK…DRQR. Basic and acidic residues-rich tracts occupy residues 769 to 779 and 927 to 940; these read GRRDSWIERGS and PVKE…DRQR. Residues Ser932, Ser935, and Ser967 each carry the phosphoserine modification.

Belongs to the SAPAP family. In terms of assembly, interacts with DLG4/PSD-95.

The protein resides in the cell membrane. Its subcellular location is the postsynaptic density. It localises to the synapse. May play a role in the molecular organization of synapses and neuronal cell signaling. Could be an adapter protein linking ion channel to the subsynaptic cytoskeleton. May induce enrichment of PSD-95/SAP90 at the plasma membrane. The sequence is that of Disks large-associated protein 3 (DLGAP3) from Homo sapiens (Human).